The following is a 385-amino-acid chain: S-adenosylmethionine synthase (385 aa).

Position 15 (H15) interacts with ATP. D17 contributes to the Mg(2+) binding site. Position 43 (E43) interacts with K(+). E56 and Q99 together coordinate L-methionine. The segment at 99 to 109 (QSPDINQGVDR) is flexible loop. ATP is bound by residues 164–166 (DAK), 230–231 (RF), D239, 245–246 (RK), A262, and K266. D239 is an L-methionine binding site. Position 270 (K270) interacts with L-methionine.

It belongs to the AdoMet synthase family. In terms of assembly, homotetramer; dimer of dimers. Mg(2+) is required as a cofactor. It depends on K(+) as a cofactor.

The protein resides in the cytoplasm. The catalysed reaction is L-methionine + ATP + H2O = S-adenosyl-L-methionine + phosphate + diphosphate. It participates in amino-acid biosynthesis; S-adenosyl-L-methionine biosynthesis; S-adenosyl-L-methionine from L-methionine: step 1/1. Functionally, catalyzes the formation of S-adenosylmethionine (AdoMet) from methionine and ATP. The overall synthetic reaction is composed of two sequential steps, AdoMet formation and the subsequent tripolyphosphate hydrolysis which occurs prior to release of AdoMet from the enzyme. In Hamiltonella defensa subsp. Acyrthosiphon pisum (strain 5AT), this protein is S-adenosylmethionine synthase.